Here is a 336-residue protein sequence, read N- to C-terminus: Glycerol-3-phosphate dehydrogenase [NAD(P)+] (336 aa).

The NADPH site is built by S13, W14, R34, and K108. Sn-glycerol 3-phosphate is bound by residues K108, G138, and S140. A142 contributes to the NADPH binding site. The sn-glycerol 3-phosphate site is built by K193, D246, S256, R257, and N258. K193 serves as the catalytic Proton acceptor. Position 257 (R257) interacts with NADPH. NADPH contacts are provided by V281 and E283.

It belongs to the NAD-dependent glycerol-3-phosphate dehydrogenase family.

Its subcellular location is the cytoplasm. The catalysed reaction is sn-glycerol 3-phosphate + NAD(+) = dihydroxyacetone phosphate + NADH + H(+). It carries out the reaction sn-glycerol 3-phosphate + NADP(+) = dihydroxyacetone phosphate + NADPH + H(+). Its pathway is membrane lipid metabolism; glycerophospholipid metabolism. Catalyzes the reduction of the glycolytic intermediate dihydroxyacetone phosphate (DHAP) to sn-glycerol 3-phosphate (G3P), the key precursor for phospholipid synthesis. This Carboxydothermus hydrogenoformans (strain ATCC BAA-161 / DSM 6008 / Z-2901) protein is Glycerol-3-phosphate dehydrogenase [NAD(P)+].